Here is a 46-residue protein sequence, read N- to C-terminus: Endochitinase 3 (46 aa).

Positions 1–21 are disordered; sequence MTPQGNKPSSHDVITGRWTPS.

It belongs to the glycosyl hydrolase 19 family. Chitinase class I subfamily.

The enzyme catalyses Random endo-hydrolysis of N-acetyl-beta-D-glucosaminide (1-&gt;4)-beta-linkages in chitin and chitodextrins.. Its function is as follows. Defense against chitin-containing fungal and bacterial pathogens. This Arachis hypogaea (Peanut) protein is Endochitinase 3.